Consider the following 399-residue polypeptide: Succinate--CoA ligase [ADP-forming] subunit beta (399 aa).

Residues 9–254 (KAVLKSFGAP…TTEEDEKEIE (246 aa)) form the ATP-grasp domain. Residues lysine 46, 53 to 55 (GRG), glutamate 109, alanine 112, and glutamate 117 each bind ATP. The Mg(2+) site is built by asparagine 209 and aspartate 223. Substrate contacts are provided by residues asparagine 274 and 331–333 (GIM).

It belongs to the succinate/malate CoA ligase beta subunit family. Heterotetramer of two alpha and two beta subunits. The cofactor is Mg(2+).

It catalyses the reaction succinate + ATP + CoA = succinyl-CoA + ADP + phosphate. The enzyme catalyses GTP + succinate + CoA = succinyl-CoA + GDP + phosphate. The protein operates within carbohydrate metabolism; tricarboxylic acid cycle; succinate from succinyl-CoA (ligase route): step 1/1. Succinyl-CoA synthetase functions in the citric acid cycle (TCA), coupling the hydrolysis of succinyl-CoA to the synthesis of either ATP or GTP and thus represents the only step of substrate-level phosphorylation in the TCA. The beta subunit provides nucleotide specificity of the enzyme and binds the substrate succinate, while the binding sites for coenzyme A and phosphate are found in the alpha subunit. This chain is Succinate--CoA ligase [ADP-forming] subunit beta, found in Maricaulis maris (strain MCS10) (Caulobacter maris).